The following is a 351-amino-acid chain: Probable minor fimbrial subunit LpfD (351 aa).

An N-terminal signal peptide occupies residues 1 to 22 (MKAAIALSLLGCVFGFSGKAFA).

It belongs to the fimbrial protein family.

The protein resides in the fimbrium. Its function is as follows. Part of the lpfABCC'DE fimbrial operon. LP fimbriae may participate in the interaction with eukaryotic cells by assisting in microcolony formation. This is Probable minor fimbrial subunit LpfD (lpfD) from Escherichia coli O157:H7.